The primary structure comprises 307 residues: Ventral anterior homeobox 2 (307 aa).

3 disordered regions span residues 1 to 70 (MFDQ…DKLL), 155 to 175 (RTKQ…STSE), and 197 to 254 (PPPN…PSPR). A compositionally biased stretch (basic and acidic residues) spans 25–38 (CRDRGRESKSRTEV). Low complexity predominate over residues 46–62 (SSTDTPGTSASTPTSSS). Residues 103–162 (PKRTRTSFTAEQLYRLELEFQRCQYVVGRERTELARQLNLSETQVKVWFQNRRTKQKKDQ) constitute a DNA-binding region (homeobox). Basic and acidic residues predominate over residues 159–170 (KKDQTKDTDKRS). The segment covering 202 to 249 (LLAHPHPGNGSLLGSPSVSTSSGVSSSTTPPGAGSGTFGLSLSSLSGT) has biased composition (low complexity).

It belongs to the EMX homeobox family. Expressed in the anterior neural keel and later in the preoptic area, optic stalk and ventral retina.

It is found in the nucleus. Functionally, transcription factor that may function in dorsoventral specification of the forebrain. Required for closure of the choroid fissure and together with vax1 is required for optic nerve differentiation and to limit retinal development to the optic cup. The polypeptide is Ventral anterior homeobox 2 (vax2) (Danio rerio (Zebrafish)).